Consider the following 298-residue polypeptide: Lipoyl synthase (298 aa).

Cysteine 40, cysteine 45, cysteine 51, cysteine 67, cysteine 71, cysteine 74, and serine 280 together coordinate [4Fe-4S] cluster. In terms of domain architecture, Radical SAM core spans alanine 53–serine 269.

It belongs to the radical SAM superfamily. Lipoyl synthase family. [4Fe-4S] cluster is required as a cofactor.

It localises to the cytoplasm. The enzyme catalyses [[Fe-S] cluster scaffold protein carrying a second [4Fe-4S](2+) cluster] + N(6)-octanoyl-L-lysyl-[protein] + 2 oxidized [2Fe-2S]-[ferredoxin] + 2 S-adenosyl-L-methionine + 4 H(+) = [[Fe-S] cluster scaffold protein] + N(6)-[(R)-dihydrolipoyl]-L-lysyl-[protein] + 4 Fe(3+) + 2 hydrogen sulfide + 2 5'-deoxyadenosine + 2 L-methionine + 2 reduced [2Fe-2S]-[ferredoxin]. The protein operates within protein modification; protein lipoylation via endogenous pathway; protein N(6)-(lipoyl)lysine from octanoyl-[acyl-carrier-protein]. In terms of biological role, catalyzes the radical-mediated insertion of two sulfur atoms into the C-6 and C-8 positions of the octanoyl moiety bound to the lipoyl domains of lipoate-dependent enzymes, thereby converting the octanoylated domains into lipoylated derivatives. The chain is Lipoyl synthase from Bacillus cytotoxicus (strain DSM 22905 / CIP 110041 / 391-98 / NVH 391-98).